Reading from the N-terminus, the 295-residue chain is tRNA-cytidine(32) 2-sulfurtransferase (295 aa).

A PP-loop motif motif is present at residues 63–68 (SGGKDS). 3 residues coordinate [4Fe-4S] cluster: C138, C141, and C229.

It belongs to the TtcA family. In terms of assembly, homodimer. Requires Mg(2+) as cofactor. [4Fe-4S] cluster is required as a cofactor.

It localises to the cytoplasm. The catalysed reaction is cytidine(32) in tRNA + S-sulfanyl-L-cysteinyl-[cysteine desulfurase] + AH2 + ATP = 2-thiocytidine(32) in tRNA + L-cysteinyl-[cysteine desulfurase] + A + AMP + diphosphate + H(+). Its pathway is tRNA modification. Functionally, catalyzes the ATP-dependent 2-thiolation of cytidine in position 32 of tRNA, to form 2-thiocytidine (s(2)C32). The sulfur atoms are provided by the cysteine/cysteine desulfurase (IscS) system. This Hyphomonas neptunium (strain ATCC 15444) protein is tRNA-cytidine(32) 2-sulfurtransferase.